Here is a 131-residue protein sequence, read N- to C-terminus: Protein NEGATIVE REGULATOR OF RESISTANCE (131 aa).

Disordered stretches follow at residues 1–33 (MDAT…DEVS) and 51–131 (TRRL…RAPA). The short motif at 12–15 (KRKR) is the Nuclear localization signal element. Residues 116 to 131 (PPSDAPATPRSARAPA) are compositionally biased toward low complexity.

It belongs to the NPR1-interactor family. Interacts with NPR1/NH1. Interacts with NPR2/NH2.

It localises to the nucleus. Acts as a negative regulator of disease resistance. Acts on basal resistance, age-related resistance and resistance mediated by the LRR receptor kinase XA21. Plants over-expressing NRR display enhanced susceptibility to the bacterial blight Xanthomonas oryzae pv. oryzae (Xoo). This chain is Protein NEGATIVE REGULATOR OF RESISTANCE, found in Oryza sativa subsp. indica (Rice).